We begin with the raw amino-acid sequence, 313 residues long: Ribosomal protein L11 methyltransferase (313 aa).

Positions 161, 182, 204, and 247 each coordinate S-adenosyl-L-methionine.

Belongs to the methyltransferase superfamily. PrmA family.

The protein localises to the cytoplasm. The catalysed reaction is L-lysyl-[protein] + 3 S-adenosyl-L-methionine = N(6),N(6),N(6)-trimethyl-L-lysyl-[protein] + 3 S-adenosyl-L-homocysteine + 3 H(+). Its function is as follows. Methylates ribosomal protein L11. The protein is Ribosomal protein L11 methyltransferase of Halalkalibacterium halodurans (strain ATCC BAA-125 / DSM 18197 / FERM 7344 / JCM 9153 / C-125) (Bacillus halodurans).